A 1187-amino-acid polypeptide reads, in one-letter code: Myelin transcription factor 1-like protein (1187 aa).

Residues 1-20 (MDVDAEEKRHRTRSKGVRVP) form a disordered region. The segment at 22 to 65 (EPAIQELFSCPTPGCDGSGHVSGKYARHRSVYGCPLAKKRKTQD) adopts a CCHHC-type 1 zinc-finger fold. Cys-31, Cys-36, His-49, and Cys-55 together coordinate Zn(2+). Disordered regions lie at residues 56–178 (PLAK…QMSC) and 221–248 (RTES…GRKS). A compositionally biased stretch (acidic residues) spans 89-172 (ECYESDGTED…EEEEEEEENE (84 aa)). At Ser-251 the chain carries Phosphoserine. Disordered stretches follow at residues 343–422 (SETN…DRSE) and 450–509 (REKM…PTPG). Over residues 344–358 (ETNPQDRSQPPNMSV) the composition is skewed to polar residues. Composition is skewed to basic and acidic residues over residues 362-377 (VRQE…DRSY), 401-412 (AKEDGCHERDDD), and 450-504 (REKM…RESK). 2 consecutive CCHHC-type zinc fingers follow at residues 496–539 (SRTE…PPEI) and 540–583 (LAMH…KLAK). 8 residues coordinate Zn(2+): Cys-505, Cys-510, His-523, Cys-529, Cys-549, Cys-554, His-567, and Cys-573. Positions 684–708 (ASPSSSTTSSYAPSSSSNLSCGGGS) are disordered. CCHHC-type zinc fingers lie at residues 895-938 (LATS…GIRI), 944-987 (DKED…QKDG), and 997-1040 (KSVK…MKKA). Zn(2+) is bound by residues Cys-904, Cys-909, His-922, Cys-928, Cys-953, Cys-958, His-971, Cys-977, Cys-1006, Cys-1011, His-1024, and Cys-1030. Residues 1055–1131 (SNGIENDEEI…LANLSQSLIH (77 aa)) adopt a coiled-coil conformation.

It belongs to the MYT1 family. As to quaternary structure, interacts with SIN3B. As to expression, brain, testis and pituitary gland. Expression is higher in the brain than in the testis and pituitary gland. Highest level expression seen in the developing CNS.

The protein resides in the nucleus. It is found in the chromosome. Transcription factor that plays a key role in neuronal differentiation. Acts by specifically repressing expression of non-neuronal genes during neuron differentiation. In contrast to other transcription repressors that inhibit specific lineages, mediates repression of multiple differentiation programs. Also represses expression of negative regulators of neurogenesis, such as members of the Notch signaling pathway, including HES1. The combination of three transcription factors, ASCL1, POU3F2/BRN2 and MYT1L, is sufficient to reprogram fibroblasts and other somatic cells into induced neuronal (iN) cells in vitro. Directly binds the 5'-AAGTT-3' core motif present on the promoter of target genes and represses transcription by recruiting a multiprotein complex containing SIN3B. The 5'-AAGTT-3' core motif is absent from the promoter of neural genes. This is Myelin transcription factor 1-like protein (Myt1l) from Rattus norvegicus (Rat).